The primary structure comprises 562 residues: tRNA (guanine(37)-N(1))-methyltransferase (562 aa).

Residues 1–41 (MLFRRFLNLTTKTPHLQTFRARHYFRNMSCPELIPPPTVRG) constitute a mitochondrion transit peptide. S-adenosyl-L-methionine is bound by residues H243, 281-282 (DL), and N340. Basic and acidic residues predominate over residues 523–534 (AHIVAKKPEKKP). A disordered region spans residues 523-562 (AHIVAKKPEKKPLPAKPASKKNKNQANTKQVEAGLDKMQM).

This sequence belongs to the class I-like SAM-binding methyltransferase superfamily. TRM5/TYW2 family. Monomer.

It is found in the mitochondrion matrix. The protein localises to the nucleus. Its subcellular location is the cytoplasm. It carries out the reaction guanosine(37) in tRNA + S-adenosyl-L-methionine = N(1)-methylguanosine(37) in tRNA + S-adenosyl-L-homocysteine + H(+). Specifically methylates the N1 position of guanosine-37 in various cytoplasmic and mitochondrial tRNAs. Methylation is not dependent on the nature of the nucleoside 5' of the target nucleoside. This is the first step in the biosynthesis of wybutosine (yW), a modified base adjacent to the anticodon of tRNAs and required for accurate decoding. The polypeptide is tRNA (guanine(37)-N(1))-methyltransferase (Aedes aegypti (Yellowfever mosquito)).